Consider the following 535-residue polypeptide: tRNA-2-methylthio-N(6)-dimethylallyladenosine synthase (535 aa).

An MTTase N-terminal domain is found at 24–139 (RTYEVRTFGC…LPRLLERARH (116 aa)). The [4Fe-4S] cluster site is built by C33, C68, C102, C176, C180, and C183. The region spanning 162 to 392 (RDSSFSGWVS…IALQERISLE (231 aa)) is the Radical SAM core domain. The region spanning 395-465 (EKLIGRDVEL…PHYLIADAAG (71 aa)) is the TRAM domain. The segment at 512–535 (RTREPLTSPGVGTMPLYDPTDGQR) is disordered.

It belongs to the methylthiotransferase family. MiaB subfamily. As to quaternary structure, monomer. The cofactor is [4Fe-4S] cluster.

The protein localises to the cytoplasm. It catalyses the reaction N(6)-dimethylallyladenosine(37) in tRNA + (sulfur carrier)-SH + AH2 + 2 S-adenosyl-L-methionine = 2-methylsulfanyl-N(6)-dimethylallyladenosine(37) in tRNA + (sulfur carrier)-H + 5'-deoxyadenosine + L-methionine + A + S-adenosyl-L-homocysteine + 2 H(+). Catalyzes the methylthiolation of N6-(dimethylallyl)adenosine (i(6)A), leading to the formation of 2-methylthio-N6-(dimethylallyl)adenosine (ms(2)i(6)A) at position 37 in tRNAs that read codons beginning with uridine. The sequence is that of tRNA-2-methylthio-N(6)-dimethylallyladenosine synthase from Leifsonia xyli subsp. xyli (strain CTCB07).